An 802-amino-acid polypeptide reads, in one-letter code: Leucine--tRNA ligase (802 aa).

A 'HIGH' region motif is present at residues 40–51 (PYPSGAGLHVGH). The 'KMSKS' region signature appears at 576 to 580 (KMSKS). ATP is bound at residue Lys579.

This sequence belongs to the class-I aminoacyl-tRNA synthetase family.

The protein resides in the cytoplasm. It catalyses the reaction tRNA(Leu) + L-leucine + ATP = L-leucyl-tRNA(Leu) + AMP + diphosphate. This is Leucine--tRNA ligase from Bacillus cereus (strain B4264).